An 86-amino-acid polypeptide reads, in one-letter code: Cell division topological specificity factor (86 aa).

It belongs to the MinE family.

Functionally, prevents the cell division inhibition by proteins MinC and MinD at internal division sites while permitting inhibition at polar sites. This ensures cell division at the proper site by restricting the formation of a division septum at the midpoint of the long axis of the cell. The sequence is that of Cell division topological specificity factor from Shewanella loihica (strain ATCC BAA-1088 / PV-4).